A 208-amino-acid chain; its full sequence is MINNIFNKKLLVYNEKDQRWYNKFDRTKPLFSPSRLLSFKNYIFEKIPAKNLEYPIEFGTSLMQIIQYYFENQSKLDVILNSINEEKLKEVFLLFLDYLKTNDYSLIAVELHLFSPKLNHYWHGFADVVVKTKDDKYKVLEIKTHNEIQSVPSWKFQAGVYDYIISQELSNYEPSAILAFSRKQAKLSVYENDSLDLSFINKINELYS.

This is an uncharacterized protein from Ureaplasma parvum serovar 3 (strain ATCC 700970).